A 683-amino-acid chain; its full sequence is U4/U6 small nuclear ribonucleoprotein Prp3 (683 aa).

The region spanning Met-1–Arg-87 is the PWI domain. Basic and acidic residues predominate over residues Gly-73–Gly-107. The disordered stretch occupies residues Gly-73–Gly-135. Lys-139 is covalently cross-linked (Glycyl lysine isopeptide (Lys-Gly) (interchain with G-Cter in SUMO2)). The segment at Ser-161–Ile-183 is disordered. Ser-164 is subject to Phosphoserine. Residues Lys-244 and Lys-252 each participate in a glycyl lysine isopeptide (Lys-Gly) (interchain with G-Cter in SUMO2) cross-link. The mediates interaction with SART3 stretch occupies residues Asn-416–Asn-550. Ser-619 is subject to Phosphoserine.

Component of the precatalytic spliceosome (spliceosome B complex). Component of the U4/U6-U5 tri-snRNP complex, a building block of the precatalytic spliceosome (spliceosome B complex). The U4/U6-U5 tri-snRNP complex is composed of the U4, U6 and U5 snRNAs and at least PRPF3, PRPF4, PRPF6, PRPF8, PRPF31, SNRNP200, TXNL4A, SNRNP40, SNRPB, SNRPD1, SNRPD2, SNRPD3, SNRPE, SNRPF, SNRPG, DDX23, CD2BP2, PPIH, SNU13, EFTUD2, SART1 and USP39, plus LSM2, LSM3, LSM4, LSM5, LSM6, LSM7 and LSM8. Interacts directly with PRPF4. Part of a heteromeric complex containing PPIH, PRPF3 and PRPF4 that is stable in the absence of RNA. Interacts with SART3; the interaction is direct and recruits the deubiquitinase USP4 to PRPF3. Interacts with PRPF19. Interacts ('Lys-63'-linked polyubiquitinated) with PRPF8 (via the MPN (JAB/Mov34) domain); may stabilize the U4/U6-U5 tri-snRNP complex. Interacts with ERCC6. Ubiquitinated. Undergoes 'Lys-63'-linked polyubiquitination by PRPF19 and deubiquitination by USP4. 'Lys-63'-linked ubiquitination increases the affinity for PRPF8 and may regulate the assembly of the U4/U6-U5 tri-snRNP complex.

Its subcellular location is the nucleus. It is found in the nucleus speckle. In terms of biological role, plays a role in pre-mRNA splicing as component of the U4/U6-U5 tri-snRNP complex that is involved in spliceosome assembly, and as component of the precatalytic spliceosome (spliceosome B complex). The sequence is that of U4/U6 small nuclear ribonucleoprotein Prp3 (Prpf3) from Mus musculus (Mouse).